A 454-amino-acid chain; its full sequence is Type II methyltransferase M.MvaI (454 aa).

Belongs to the N(4)/N(6)-methyltransferase family. N(4) subfamily.

It catalyses the reaction a 2'-deoxycytidine in DNA + S-adenosyl-L-methionine = an N(4)-methyl-2'-deoxycytidine in DNA + S-adenosyl-L-homocysteine + H(+). In terms of biological role, an alpha subtype methylase, recognizes the double-stranded sequence 5'-CCWGG-3', methylatES C-2 on both strands, and protects the DNA from cleavage by the MvaI endonuclease. This Kocuria varians (Micrococcus varians) protein is Type II methyltransferase M.MvaI.